A 421-amino-acid polypeptide reads, in one-letter code: NAD-specific glutamate dehydrogenase (421 aa).

2 residues coordinate substrate: Lys71 and Lys95. Residue Lys107 is the Proton donor of the active site. Thr191 and Asn222 together coordinate NAD(+). Ser355 contributes to the substrate binding site.

The protein belongs to the Glu/Leu/Phe/Val dehydrogenases family. As to quaternary structure, homohexamer.

It catalyses the reaction L-glutamate + NAD(+) + H2O = 2-oxoglutarate + NH4(+) + NADH + H(+). This Clostridioides difficile (Peptoclostridium difficile) protein is NAD-specific glutamate dehydrogenase (gluD).